A 433-amino-acid polypeptide reads, in one-letter code: 4-hydroxy-3-methylbut-2-en-1-yl diphosphate synthase (flavodoxin) (433 aa).

The [4Fe-4S] cluster site is built by Cys320, Cys323, Cys366, and Glu373.

It belongs to the IspG family. [4Fe-4S] cluster is required as a cofactor.

The catalysed reaction is (2E)-4-hydroxy-3-methylbut-2-enyl diphosphate + oxidized [flavodoxin] + H2O + 2 H(+) = 2-C-methyl-D-erythritol 2,4-cyclic diphosphate + reduced [flavodoxin]. It participates in isoprenoid biosynthesis; isopentenyl diphosphate biosynthesis via DXP pathway; isopentenyl diphosphate from 1-deoxy-D-xylulose 5-phosphate: step 5/6. Converts 2C-methyl-D-erythritol 2,4-cyclodiphosphate (ME-2,4cPP) into 1-hydroxy-2-methyl-2-(E)-butenyl 4-diphosphate. The polypeptide is 4-hydroxy-3-methylbut-2-en-1-yl diphosphate synthase (flavodoxin) (Beijerinckia indica subsp. indica (strain ATCC 9039 / DSM 1715 / NCIMB 8712)).